The primary structure comprises 230 residues: Large ribosomal subunit protein uL1c (230 aa).

This sequence belongs to the universal ribosomal protein uL1 family. Part of the 50S ribosomal subunit.

It localises to the plastid. It is found in the chloroplast. Its function is as follows. Binds directly to 23S rRNA. Might be involved in E site tRNA release (Potential). The chain is Large ribosomal subunit protein uL1c (rpl1) from Thalassiosira pseudonana (Marine diatom).